A 391-amino-acid polypeptide reads, in one-letter code: Elongation factor Tu (391 aa).

The region spanning 10-201 (KPHVNIGTIG…AVDEYIPTPA (192 aa)) is the tr-type G domain. The tract at residues 19-26 (GHVDHGKT) is G1. 19-26 (GHVDHGKT) contacts GTP. Threonine 26 serves as a coordination point for Mg(2+). The segment at 55–59 (GITIS) is G2. Positions 76–79 (DCPG) are G3. GTP contacts are provided by residues 76-80 (DCPGH) and 131-134 (NKVD). The segment at 131 to 134 (NKVD) is G4. The tract at residues 169-171 (SAL) is G5.

This sequence belongs to the TRAFAC class translation factor GTPase superfamily. Classic translation factor GTPase family. EF-Tu/EF-1A subfamily. Monomer.

The protein resides in the cytoplasm. The catalysed reaction is GTP + H2O = GDP + phosphate + H(+). Its function is as follows. GTP hydrolase that promotes the GTP-dependent binding of aminoacyl-tRNA to the A-site of ribosomes during protein biosynthesis. The protein is Elongation factor Tu of Jannaschia sp. (strain CCS1).